The primary structure comprises 416 residues: Keratin, type I cuticular Ha1 (416 aa).

Positions 2 to 56 are head; the sequence is PYNCCLPALSCRTSCSSRPCVPPSCHGCTLPGACNIPANVGNCNWFCEGSFNGNE. An IF rod domain is found at 56-367; sequence EKETMQFLND…GLLESEDCKL (312 aa). Residues 57-91 form a coil 1A region; the sequence is KETMQFLNDRLASYMEKVRQLERENAELECRIQER. Residues 92–102 are linker 1; that stretch reads NQQQDPLVCPA. The interval 103–203 is coil 1B; sequence YQAYFRTIEE…HEEEVNTLRC (101 aa). Residues 204–219 are linker 12; it reads QLGDRLNVEVDAAPTV. The coil 2 stretch occupies residues 220–363; that stretch reads DLNRVLNETR…NTYRGLLESE (144 aa). The tail stretch occupies residues 364–416; sequence DCKLPCNPCATSNACGKPIGPCVSNPCVPCPPPAPCTPCVPRPRCGPCNSFVR.

The protein belongs to the intermediate filament family.

In Mus musculus (Mouse), this protein is Keratin, type I cuticular Ha1 (Krt31).